Reading from the N-terminus, the 1481-residue chain is Cystic fibrosis transmembrane conductance regulator (1481 aa).

The Cytoplasmic portion of the chain corresponds to 1–77 (MQRSPLEKAS…KLINALRRCF (77 aa)). The helical transmembrane segment at 78–98 (FWRFMFYGILLYLGEVTKAVQ) threads the bilayer. The ABC transmembrane type-1 1 domain occupies 81-365 (FMFYGILLYL…WAVQTWYDSL (285 aa)). Over 99-122 (PLLLGRIIASYDPDNKEERSIAIY) the chain is Extracellular. A helical transmembrane segment spans residues 123-146 (LGIGLCLLFIVRTLLLHPAIFGLH). The Cytoplasmic portion of the chain corresponds to 147–195 (HIGMQMRIAMFSLIYKKTLKLSSRVLDKISIGQLVSLLSNNLNKFDEGL). Residues 196 to 216 (ALAHFVWIVPLQVALLMGLIW) form a helical membrane-spanning segment. The Extracellular portion of the chain corresponds to 217 to 222 (ELLQAS). The helical transmembrane segment at 223-243 (AFCGLGFLIVLALFQAGLGRM) threads the bilayer. At 244–298 (MMKYRDQRAGKINERLVITSEMIENIQSVKAYCWEEAMEKMIENLRQTELKLTRK) the chain is on the cytoplasmic side. Residues 299–319 (AAYVRYFNSSAFFFSGFFVVF) traverse the membrane as a helical segment. Residues 320–339 (LSVLPYALIKGIVLRKIFTT) are Extracellular-facing. The chain crosses the membrane as a helical span at residues 340–358 (ISFCIVLRMAVTRQFPWAV). The Cytoplasmic segment spans residues 359 to 858 (QTWYDSLGAI…YLRYITVHKS (500 aa)). Residues Trp401, Ser434, 458 to 465 (GSTGAGKT), and Gln493 contribute to the ATP site. Positions 423 to 646 (NDDDSLFFSN…RPDFSSKLMG (224 aa)) constitute an ABC transporter 1 domain. A lipid anchor (S-palmitoyl cysteine) is attached at Cys524. Ser549 and Ser660 each carry phosphoserine. The interval 654 to 831 (SAERRNSILT…EEINEEDLKE (178 aa)) is disordered R region. The residue at position 670 (Ser670) is a Phosphoserine; by PKA. Ser686 is subject to Phosphoserine. Lys688 is covalently cross-linked (Glycyl lysine isopeptide (Lys-Gly) (interchain with G-Cter in ubiquitin)). Ser700 and Ser712 each carry phosphoserine. Thr717 bears the Phosphothreonine mark. Phosphoserine occurs at positions 737, 753, 768, 790, 795, and 813. A helical transmembrane segment spans residues 859-879 (LIFVLIWCLVIFLAEVAASLV). The region spanning 859-1155 (LIFVLIWCLV…AVNSSIDVDS (297 aa)) is the ABC transmembrane type-1 2 domain. The Extracellular portion of the chain corresponds to 880–918 (VLWFLGNTPPQDKGNSTYSRNNSYAVIITRTSSYYVFYI). Asn894 and Asn900 each carry an N-linked (GlcNAc...) asparagine glycan. The discontinuously helical transmembrane segment at 919-939 (YVGVADTLLAMGFFRGLPLVH) threads the bilayer. Residues 940–990 (TLITVSKILHHKMLHSVLQAPMSTLNTLKAGGILNRFSKDIAILDDLLPLT) are Cytoplasmic-facing. A helical membrane pass occupies residues 991 to 1011 (IFDFIQLLLIVIGAIAVVAVL). Over 1012-1013 (QP) the chain is Extracellular. The helical transmembrane segment at 1014-1034 (YIFVATVPVIVAFIMLRAYFL) threads the bilayer. At 1035 to 1095 (QTSQQLKQLE…TANWFLYLST (61 aa)) the chain is on the cytoplasmic side. Residues 1096–1116 (LRWFQMRIEMIFVIFFIAVTF) form a helical membrane-spanning segment. The Extracellular portion of the chain corresponds to 1117–1130 (ISILTTGEGEGTVG). A helical transmembrane segment spans residues 1131-1151 (IILTLAMNIMSTLQWAVNSSI). Topologically, residues 1152-1481 (DVDSLMRSVS…TEEEVQDTRL (330 aa)) are cytoplasmic. In terms of domain architecture, ABC transporter 2 spans 1211 to 1444 (MTVKDLTAKY…RSLFQQAISP (234 aa)). ATP is bound by residues Tyr1220 and 1245–1252 (GRTGSGKS). The segment at 1387–1481 (RTLKQAFADC…TEEEVQDTRL (95 aa)) is interaction with GORASP2. The S-palmitoyl cysteine moiety is linked to residue Cys1396. Ser1445 and Ser1457 each carry phosphoserine. Residues 1479–1481 (TRL) carry the PDZ-binding motif.

The protein belongs to the ABC transporter superfamily. ABCC family. CFTR transporter (TC 3.A.1.202) subfamily. As to quaternary structure, monomer; does not require oligomerization for channel activity. May form oligomers in the membrane. Interacts with SLC26A3, SLC26A6 and NHERF1. Interacts with SHANK2. Interacts with MYO6. Interacts (via C-terminus) with GOPC (via PDZ domain); this promotes CFTR internalization and thereby decreases channel activity. Interacts with SLC4A7 through NHERF1. Found in a complex with MYO5B and RAB11A. Interacts with ANO1. Interacts with SLC26A8. Interacts with AHCYL1; the interaction increases CFTR activity. Interacts with CSE1L. The core-glycosylated form interacts with GORASP2 (via PDZ GRASP-type 1 domain) in respone to ER stress. Interacts with MARCHF2; the interaction leads to CFTR ubiqtuitination and degradation. Interacts with ADGRG2. In terms of processing, N-glycosylated. Post-translationally, phosphorylated; cAMP treatment promotes phosphorylation and activates the channel. Dephosphorylation decreases the ATPase activity (in vitro). Phosphorylation at PKA sites activates the channel. Phosphorylation at PKC sites enhances the response to phosphorylation by PKA. Phosphorylated by AMPK; this inhibits channel activity. Ubiquitinated, leading to its degradation in the lysosome. Deubiquitination by USP10 in early endosomes enhances its endocytic recycling to the cell membrane. Ubiquitinated by RNF185 during ER stress. Ubiquitinated by MARCHF2.

The protein localises to the apical cell membrane. Its subcellular location is the early endosome membrane. The protein resides in the cell membrane. It is found in the recycling endosome membrane. It localises to the endoplasmic reticulum membrane. The protein localises to the nucleus. The enzyme catalyses ATP + H2O + closed Cl(-) channel = ADP + phosphate + open Cl(-) channel.. The catalysed reaction is chloride(in) = chloride(out). It catalyses the reaction hydrogencarbonate(in) = hydrogencarbonate(out). It carries out the reaction ATP + H2O = ADP + phosphate + H(+). Functionally, epithelial ion channel that plays an important role in the regulation of epithelial ion and water transport and fluid homeostasis. Mediates the transport of chloride ions across the cell membrane. Possesses an intrinsic ATPase activity and utilizes ATP to gate its channel; the passive flow of anions through the channel is gated by cycles of ATP binding and hydrolysis by the ATP-binding domains. The ion channel is also permeable to HCO(3)(-); selectivity depends on the extracellular chloride concentration. Exerts its function also by modulating the activity of other ion channels and transporters. Contributes to the regulation of the pH and the ion content of the epithelial fluid layer. Modulates the activity of the epithelial sodium channel (ENaC) complex, in part by regulating the cell surface expression of the ENaC complex. May regulate bicarbonate secretion and salvage in epithelial cells by regulating the transporter SLC4A7. Can inhibit the chloride channel activity of ANO1. Plays a role in the chloride and bicarbonate homeostasis during sperm epididymal maturation and capacitation. The polypeptide is Cystic fibrosis transmembrane conductance regulator (Macaca nemestrina (Pig-tailed macaque)).